The following is a 192-amino-acid chain: Intraflagellar transport protein 22 (192 aa).

GTP-binding positions include 12–19 (GPQRTGKT) and 62–69 (WDVSGSVQ).

This sequence belongs to the small GTPase superfamily. Rab family. Component of the IFT complex B, composed of IFT88, IFT70, IFT52, IFT46, IFT27, IFT25 and IFT22.

The protein localises to the cell projection. It localises to the cilium. It is found in the flagellum. Functionally, component of the intraflagellar transport (IFT) complex B. Functions in regulating the cellular pool size of both complex A and complex B and thus plays a critical role in determining the cellular availability of IFT particles. The sequence is that of Intraflagellar transport protein 22 (FAP9) from Chlamydomonas reinhardtii (Chlamydomonas smithii).